Reading from the N-terminus, the 290-residue chain is Uridine diphosphate glucose pyrophosphatase NUDT22 (290 aa).

Residues Phe-56, Tyr-87, Arg-139, Ala-144, Asp-151, His-156, and Glu-158 each contribute to the substrate site. Residues 118–285 enclose the Nudix hydrolase domain; it reads ADPLGVGAAL…KGAIFLYNRV (168 aa). The short motif at 175–196 is the Nudix box element; sequence GELVVHELFSSVLQEICDEVNV. 2 residues coordinate Mg(2+): Glu-189 and Glu-193. Ser-274 provides a ligand contact to substrate.

The protein belongs to the Nudix family. Requires Mg(2+) as cofactor.

The enzyme catalyses UDP-sugar + H2O = UMP + alpha-D-aldose 1-phosphate.. In terms of biological role, hydrolyzes UDP-glucose to glucose 1-phosphate and UMP and UDP-galactose to galactose 1-phosphate and UMP. Preferred substrate is UDP-glucose. The sequence is that of Uridine diphosphate glucose pyrophosphatase NUDT22 (NUDT22) from Bos taurus (Bovine).